The primary structure comprises 748 residues: Pentatricopeptide repeat-containing protein At3g13880 (748 aa).

PPR repeat units lie at residues 46-80, 81-111, 112-146, 147-181, 182-212, 213-247, 248-285, 286-316, 317-356, 357-391, 392-422, 423-457, 458-492, 493-523, 524-558, 559-589, and 595-629; these read DSEG…SLNP, CLYL…MPER, NIIS…NLKL, DKFT…GLSQ, QVFL…CDER, DQVS…GLNL, TTYA…GMEF, DIVV…MPSK, NVVT…GLEP, SPST…NFQS, DEFI…TSKQ, DIAS…HIRP, EEYT…GIDA, FTSV…VQNP, DVAT…GIKP, NQQA…MKND, and NEKH…DHPV. Residues 630-705 are type E motif; it reads TWRALLSSCR…EPALSWIVIG (76 aa). The interval 706–736 is type E(+) motif; it reads NQTHSFAVADLSHPSSQMIYTMLETMDNVDF.

The protein belongs to the PPR family. PCMP-E subfamily.

In Arabidopsis thaliana (Mouse-ear cress), this protein is Pentatricopeptide repeat-containing protein At3g13880 (PCMP-E89).